Reading from the N-terminus, the 796-residue chain is Peroxisome proliferator-activated receptor gamma coactivator 1-alpha (796 aa).

Position 77 is an N6-acetyllysine (Lys77). The tract at residues 98 to 138 (PVDEDGLPSFDALTDGDVTTDNEASPSSMPDGTPPPQEAEE) is disordered. A compositionally biased stretch (polar residues) spans 114-127 (DVTTDNEASPSSMP). The short motif at 142–146 (LKKLL) is the LXXLL motif element. Lys144 is subject to N6-acetyllysine. A Phosphothreonine; by AMPK modification is found at Thr176. At Lys182 the chain carries N6-acetyllysine. Positions 211-275 (YLTTNDDPPH…NDPKGSPFEN (65 aa)) are disordered. A compositionally biased stretch (basic and acidic residues) spans 217 to 235 (DPPHTKPTENRNSSRDKCA). Residues 242–258 (TQPQSQHAQAKPTTLSL) are compositionally biased toward polar residues. N6-acetyllysine is present on residues Lys252, Lys269, Lys276, Lys319, Lys345, Lys411, Lys440, and Lys449. The interval 288-350 (GTAGLTPPTT…HSTKKGPEQS (63 aa)) is disordered. The interaction with PPARG stretch occupies residues 291 to 337 (GLTPPTTPPHKANQDNPFKASPKLKPSCKTVVPPPTKRARYSECSGT). The tract at residues 348–796 (EQSELYAQLS…LKEAQRSLRR (449 aa)) is mediates interaction with RNF34. At Ser537 the chain carries Phosphoserine; by AMPK. Disordered regions lie at residues 541–597 (FNSP…SSRS) and 611–669 (HRNS…QKQK). Residues 561 to 576 (QRMRSRSRSFSRHRSC) are compositionally biased toward basic residues. Residues 577-597 (SRSPYSRSRSRSPGSRSSSRS) show a composition bias toward low complexity. A compositionally biased stretch (basic residues) spans 620-629 (SRSRSPYSRR). Residues 630-669 (PRYDSYEANEHERLKRDEYRREYEKRESERAKQRERQKQK) show a composition bias toward basic and acidic residues. Residues 675 to 751 (RVIYVGKIRP…TDFELYFCGR (77 aa)) enclose the RRM domain. An N6-acetyllysine mark is found at Lys756 and Lys777.

As to quaternary structure, homooligomer. Interacts with MYBBP1A; inhibits MYBBP1A transcriptional activation. Interacts with PRDM16, LPIN1 and PML. Interacts (via LXXLL motif) with RORA and RORC (via AF-2 motif); activates RORA and RORC transcriptional activation. Interacts with LRPPRC. Interacts with FOXO1. Interacts with NR5A2. Phosphorylation by AMPK in skeletal muscle increases activation of its own promoter. Phosphorylated by CLK2. In terms of processing, heavily acetylated by KAT2A/GCN5 under conditions of high nutrients, leading to inactivation of PPARGC1A. Deacetylated by SIRT1 in low nutrients/high NAD conditions, leading to its activation. Post-translationally, ubiquitinated. Ubiquitination by RNF34 induces proteasomal degradation.

The protein localises to the nucleus. The protein resides in the PML body. Functionally, transcriptional coactivator for steroid receptors and nuclear receptors. Greatly increases the transcriptional activity of PPARG and thyroid hormone receptor on the uncoupling protein promoter. Can regulate key mitochondrial genes that contribute to the program of adaptive thermogenesis. Plays an essential role in metabolic reprogramming in response to dietary availability through coordination of the expression of a wide array of genes involved in glucose and fatty acid metabolism. Acts as a key regulator of gluconeogenesis: stimulates hepatic gluconeogenesis by increasing the expression of gluconeogenic enzymes, and acting together with FOXO1 to promote the fasting gluconeogenic program. Induces the expression of PERM1 in the skeletal muscle in an ESRRA-dependent manner. Also involved in the integration of the circadian rhythms and energy metabolism. Required for oscillatory expression of clock genes, such as BMAL1 and NR1D1, through the coactivation of RORA and RORC, and metabolic genes, such as PDK4 and PEPCK. The chain is Peroxisome proliferator-activated receptor gamma coactivator 1-alpha (Ppargc1a) from Rattus norvegicus (Rat).